Here is a 101-residue protein sequence, read N- to C-terminus: Urease subunit beta (101 aa).

Belongs to the urease beta subunit family. In terms of assembly, heterotrimer of UreA (gamma), UreB (beta) and UreC (alpha) subunits. Three heterotrimers associate to form the active enzyme.

It is found in the cytoplasm. The catalysed reaction is urea + 2 H2O + H(+) = hydrogencarbonate + 2 NH4(+). Its pathway is nitrogen metabolism; urea degradation; CO(2) and NH(3) from urea (urease route): step 1/1. This is Urease subunit beta from Rhizobium rhizogenes (strain K84 / ATCC BAA-868) (Agrobacterium radiobacter).